Consider the following 249-residue polypeptide: Leucyl/phenylalanyl-tRNA--protein transferase (249 aa).

The segment at 1–21 is disordered; that stretch reads MSRTLPHLLSSDPASPFPPAE.

It belongs to the L/F-transferase family.

The protein localises to the cytoplasm. It catalyses the reaction N-terminal L-lysyl-[protein] + L-leucyl-tRNA(Leu) = N-terminal L-leucyl-L-lysyl-[protein] + tRNA(Leu) + H(+). The enzyme catalyses N-terminal L-arginyl-[protein] + L-leucyl-tRNA(Leu) = N-terminal L-leucyl-L-arginyl-[protein] + tRNA(Leu) + H(+). The catalysed reaction is L-phenylalanyl-tRNA(Phe) + an N-terminal L-alpha-aminoacyl-[protein] = an N-terminal L-phenylalanyl-L-alpha-aminoacyl-[protein] + tRNA(Phe). Its function is as follows. Functions in the N-end rule pathway of protein degradation where it conjugates Leu, Phe and, less efficiently, Met from aminoacyl-tRNAs to the N-termini of proteins containing an N-terminal arginine or lysine. The protein is Leucyl/phenylalanyl-tRNA--protein transferase of Xanthomonas campestris pv. campestris (strain 8004).